A 425-amino-acid polypeptide reads, in one-letter code: Serine hydroxymethyltransferase (425 aa).

(6S)-5,6,7,8-tetrahydrofolate is bound by residues L124 and 128–130 (GHL). N6-(pyridoxal phosphate)lysine is present on K233.

The protein belongs to the SHMT family. As to quaternary structure, homodimer. It depends on pyridoxal 5'-phosphate as a cofactor.

It is found in the cytoplasm. It carries out the reaction (6R)-5,10-methylene-5,6,7,8-tetrahydrofolate + glycine + H2O = (6S)-5,6,7,8-tetrahydrofolate + L-serine. The protein operates within one-carbon metabolism; tetrahydrofolate interconversion. Its pathway is amino-acid biosynthesis; glycine biosynthesis; glycine from L-serine: step 1/1. Functionally, catalyzes the reversible interconversion of serine and glycine with tetrahydrofolate (THF) serving as the one-carbon carrier. This reaction serves as the major source of one-carbon groups required for the biosynthesis of purines, thymidylate, methionine, and other important biomolecules. Also exhibits THF-independent aldolase activity toward beta-hydroxyamino acids, producing glycine and aldehydes, via a retro-aldol mechanism. This Clavibacter sepedonicus (Clavibacter michiganensis subsp. sepedonicus) protein is Serine hydroxymethyltransferase.